Reading from the N-terminus, the 393-residue chain is Dual specificity mitogen-activated protein kinase kinase 1 (393 aa).

Residues 1–27 (MPKKKPTPIQLNPAPDGSAVNGTSSAE) are disordered. Residues 68-361 (FEKISELGAG…LKQLMVHAFI (294 aa)) form the Protein kinase domain. ATP contacts are provided by residues 74–82 (LGAGNGGVV) and lysine 97. The active-site Proton acceptor is the aspartate 190. Residues serine 218 and serine 222 each carry the phosphoserine; by RAF modification. The RAF1-binding stretch occupies residues 270 to 307 (ELELMFGCQVEGDAAETPPRPRTPGRPLSSYGMDSRPP). A Phosphothreonine modification is found at threonine 286. Residue threonine 292 is modified to Phosphothreonine; by MAPK1. Residue serine 298 is modified to Phosphoserine; by PAK.

This sequence belongs to the protein kinase superfamily. STE Ser/Thr protein kinase family. MAP kinase kinase subfamily. As to quaternary structure, found in a complex with at least BRAF, HRAS, MAP2K1, MAPK3/ERK1 and RGS14. Forms a heterodimer with MAP2K2/MEK2. Forms heterodimers with KSR2 which further dimerize to form tetramers. Interacts with KSR1 or KSR2 and BRAF; the interaction with KSR1 or KSR2 mediates KSR1-BRAF or KSR2-BRAF dimerization. Interacts with ARBB2, LAMTOR3, MAPK1/ERK2 and RAF1. Interacts with MAPK1/ERK2. Interacts with MORG1. Interacts with PPARG. Interacts with isoform 1 of VRK2. Interacts with SGK1. Interacts with BIRC6/bruce. Interacts with KAT7; the interaction promotes KAT7 phosphorylation. Interacts with RAF1 and NEK10; the interaction is required for ERK1/2-signaling pathway activation in response to UV irradiation. Interacts with TRAF3IP3. Interacts with MOS. In terms of processing, phosphorylation at Ser-218 and Ser-222 by MAP kinase kinase kinases (BRAF or MEKK1) positively regulates the kinase activity. Also phosphorylated at Thr-292 by MAPK1/ERK2 and at Ser-298 by PAK. MAPK1/ERK2 phosphorylation of Thr-292 occurs in response to cellular adhesion and leads to inhibition of Ser-298 phosphorylation by PAK. Autophosphorylated at Ser-218 and Ser-222, autophosphosphorylation is promoted by NEK10 following UV irradiation.

Its subcellular location is the cytoplasm. The protein localises to the cytoskeleton. It localises to the microtubule organizing center. It is found in the centrosome. The protein resides in the spindle pole body. Its subcellular location is the nucleus. The protein localises to the membrane. It catalyses the reaction L-seryl-[protein] + ATP = O-phospho-L-seryl-[protein] + ADP + H(+). It carries out the reaction L-threonyl-[protein] + ATP = O-phospho-L-threonyl-[protein] + ADP + H(+). The enzyme catalyses L-tyrosyl-[protein] + ATP = O-phospho-L-tyrosyl-[protein] + ADP + H(+). Ras proteins such as HRAS mediate the activation of RAF proteins such as RAF1 or BRAF which in turn activate extracellular signal-regulated kinases (ERK) through MAPK (mitogen-activated protein kinases) and ERK kinases MAP2K1/MEK1 and MAP2K2/MEK2. Activation occurs through phosphorylation of Ser-218 and Ser-222. MAP2K1/MEK1 binds KSR1 or KSR2 releasing the inhibitory intramolecular interaction between KSR1 or KSR2 protein kinase and N-terminal domains. This allows KSR1 or KSR2 dimerization with BRAF leading to BRAF activation and phosphorylation of MAP2K1. MAP2K1/MEK1 is also the target of negative feed-back regulation by its substrate kinases, such as MAPK1/ERK2. These phosphorylate MAP2K1/MEK1 on Thr-292, thereby facilitating dephosphorylation of the activating residues Ser-218 and Ser-222. Inhibited by serine/threonine phosphatase 2A. In terms of biological role, dual specificity protein kinase which acts as an essential component of the MAP kinase signal transduction pathway. Binding of extracellular ligands such as growth factors, cytokines and hormones to their cell-surface receptors activates RAS and this initiates RAF1 activation. RAF1 then further activates the dual-specificity protein kinases MAP2K1/MEK1 and MAP2K2/MEK2. Both MAP2K1/MEK1 and MAP2K2/MEK2 function specifically in the MAPK/ERK cascade, and catalyze the concomitant phosphorylation of a threonine and a tyrosine residue in a Thr-Glu-Tyr sequence located in the extracellular signal-regulated kinases MAPK3/ERK1 and MAPK1/ERK2, leading to their activation and further transduction of the signal within the MAPK/ERK cascade. Activates BRAF in a KSR1 or KSR2-dependent manner; by binding to KSR1 or KSR2 releases the inhibitory intramolecular interaction between KSR1 or KSR2 protein kinase and N-terminal domains which promotes KSR1 or KSR2-BRAF dimerization and BRAF activation. Depending on the cellular context, this pathway mediates diverse biological functions such as cell growth, adhesion, survival and differentiation, predominantly through the regulation of transcription, metabolism and cytoskeletal rearrangements. One target of the MAPK/ERK cascade is peroxisome proliferator-activated receptor gamma (PPARG), a nuclear receptor that promotes differentiation and apoptosis. MAP2K1/MEK1 has been shown to export PPARG from the nucleus. The MAPK/ERK cascade is also involved in the regulation of endosomal dynamics, including lysosome processing and endosome cycling through the perinuclear recycling compartment (PNRC), as well as in the fragmentation of the Golgi apparatus during mitosis. In Pan troglodytes (Chimpanzee), this protein is Dual specificity mitogen-activated protein kinase kinase 1 (MAP2K1).